The following is a 165-amino-acid chain: Cyclic pyranopterin monophosphate synthase (165 aa).

Substrate contacts are provided by residues 83 to 85 and 120 to 121; these read FCH and ME. Aspartate 135 is an active-site residue.

This sequence belongs to the MoaC family. As to quaternary structure, homohexamer; trimer of dimers.

It carries out the reaction (8S)-3',8-cyclo-7,8-dihydroguanosine 5'-triphosphate = cyclic pyranopterin phosphate + diphosphate. It participates in cofactor biosynthesis; molybdopterin biosynthesis. Functionally, catalyzes the conversion of (8S)-3',8-cyclo-7,8-dihydroguanosine 5'-triphosphate to cyclic pyranopterin monophosphate (cPMP). In Xanthomonas oryzae pv. oryzae (strain MAFF 311018), this protein is Cyclic pyranopterin monophosphate synthase.